The primary structure comprises 348 residues: D-erythrose-4-phosphate dehydrogenase (348 aa).

NAD(+) contacts are provided by residues 12 to 13 (RI) and Arg-81. Residues 154–156 (SCT), Arg-200, 213–214 (TK), and Arg-236 each bind substrate. The active-site Nucleophile is the Cys-155. Residue Asn-318 coordinates NAD(+).

This sequence belongs to the glyceraldehyde-3-phosphate dehydrogenase family. Epd subfamily. Homotetramer.

The protein resides in the cytoplasm. It catalyses the reaction D-erythrose 4-phosphate + NAD(+) + H2O = 4-phospho-D-erythronate + NADH + 2 H(+). It functions in the pathway cofactor biosynthesis; pyridoxine 5'-phosphate biosynthesis; pyridoxine 5'-phosphate from D-erythrose 4-phosphate: step 1/5. In terms of biological role, catalyzes the NAD-dependent conversion of D-erythrose 4-phosphate to 4-phosphoerythronate. The polypeptide is D-erythrose-4-phosphate dehydrogenase (Salmonella agona (strain SL483)).